An 811-amino-acid polypeptide reads, in one-letter code: Lysine-specific histone demethylase 1 homolog 3 (811 aa).

Pro residues predominate over residues 1-10 (MSDQPPPYTP). The disordered stretch occupies residues 1–79 (MSDQPPPYTP…PSAQPPPRAS (79 aa)). Residues 44-55 (NKRKRTGFRRKL) are compositionally biased toward basic residues. A compositionally biased stretch (low complexity) spans 56 to 71 (PSGSPAAPVAVAASPS). The SWIRM domain occupies 88–189 (NREPTAEAVT…FGVAPAIKER (102 aa)). The FAD site is built by E227, R229, R235, and E609. The segment at 790-811 (RNSSRTKTRPSKLKIGIPKSKS) is disordered.

This sequence belongs to the flavin monoamine oxidase family. FAD serves as cofactor.

Functionally, probable histone demethylase. This chain is Lysine-specific histone demethylase 1 homolog 3, found in Oryza sativa subsp. indica (Rice).